Reading from the N-terminus, the 227-residue chain is Glial cell line-derived neurotrophic factor (227 aa).

The first 19 residues, 1–19 (MKLWAILAVCILLLSSVSS), serve as a signal peptide directing secretion. A propeptide spanning residues 20–93 (IPLPSNWLAG…EFIQDTIKRL (74 aa)) is cleaved from the precursor. Disordered regions lie at residues 32 to 61 (RSHL…ANMA) and 93 to 113 (LKRS…QSLA). 3 disulfide bridges follow: cysteine 134–cysteine 195, cysteine 161–cysteine 224, and cysteine 165–cysteine 226. Asparagine 142 and asparagine 178 each carry an N-linked (GlcNAc...) asparagine glycan.

The protein belongs to the TGF-beta family. GDNF subfamily. As to quaternary structure, homodimer; disulfide-linked. Interacts with GFRA1 coreceptor and RET: forms a 2:2:2 ternary complex composed of GDNF ligand, GFRA1 and RET receptor. As to expression, from stage 22, expressed in somites and the pronephros. At stage 24 and 26, expressed in the pharyngeal arches I-III. At stage 31, expression in the eye, central nervous system and pharyngeal arches IV and V increases. Up to stage 34, expression becomes intense at the oral cavity and lateral line structures. At this stage, expression weakens in the pharyngeal arches, and increases in the epibranchial arches. Expressed in the digestive tract in stage 34 embryos.

The protein localises to the secreted. Functionally, neurotrophic factor that enhances survival and morphological differentiation of dopaminergic neurons and increases their high-affinity dopamine uptake. Acts by binding to its coreceptor, GFRA1, leading to autophosphorylation and activation of the RET receptor. The chain is Glial cell line-derived neurotrophic factor from Xenopus laevis (African clawed frog).